The following is a 238-amino-acid chain: tRNA (guanine-N(7)-)-methyltransferase (238 aa).

S-adenosyl-L-methionine-binding residues include Glu-62, Glu-87, Asp-119, and Asp-141. Residue Asp-141 is part of the active site. Substrate is bound by residues Lys-145, Asp-177, and Thr-216 to Glu-219.

This sequence belongs to the class I-like SAM-binding methyltransferase superfamily. TrmB family.

The enzyme catalyses guanosine(46) in tRNA + S-adenosyl-L-methionine = N(7)-methylguanosine(46) in tRNA + S-adenosyl-L-homocysteine. The protein operates within tRNA modification; N(7)-methylguanine-tRNA biosynthesis. Catalyzes the formation of N(7)-methylguanine at position 46 (m7G46) in tRNA. This Novosphingobium aromaticivorans (strain ATCC 700278 / DSM 12444 / CCUG 56034 / CIP 105152 / NBRC 16084 / F199) protein is tRNA (guanine-N(7)-)-methyltransferase.